The chain runs to 323 residues: MPKTFANPQLTKNGELKHLLSIEGLSRDILTDVLDTAQQFVSVSDSDREVKKVPLLRGKSVFNLFFENSTRTRTTFEIAAKRLSADVINLNINASSTSKGESLLDTINNLSAMQADMFVVRHASSGAPYLIAEHVAPHVHVINAGDGRHAHPTQGLLDMFTIRHYKKDFSNLTVAIVGDILHSRVARSDIHALTTLGCAEVRAIGPRTLLPGGLEHMGVRVFHNMEEGLKGVDVVIMLRLQNERMSGALLPSAQEYFKAYGLTQDRLALAKPDAIVMHPGPMNRGVEIDSAVADGVQSVILNQVTFGIAVRMAVMGIVAGNND.

Carbamoyl phosphate contacts are provided by arginine 71 and threonine 72. Residue lysine 99 participates in L-aspartate binding. Positions 121, 151, and 154 each coordinate carbamoyl phosphate. Residues arginine 184 and arginine 239 each coordinate L-aspartate. Residues glycine 280 and proline 281 each contribute to the carbamoyl phosphate site.

It belongs to the aspartate/ornithine carbamoyltransferase superfamily. ATCase family. Heterododecamer (2C3:3R2) of six catalytic PyrB chains organized as two trimers (C3), and six regulatory PyrI chains organized as three dimers (R2).

It carries out the reaction carbamoyl phosphate + L-aspartate = N-carbamoyl-L-aspartate + phosphate + H(+). Its pathway is pyrimidine metabolism; UMP biosynthesis via de novo pathway; (S)-dihydroorotate from bicarbonate: step 2/3. Its function is as follows. Catalyzes the condensation of carbamoyl phosphate and aspartate to form carbamoyl aspartate and inorganic phosphate, the committed step in the de novo pyrimidine nucleotide biosynthesis pathway. In Ralstonia pickettii (strain 12J), this protein is Aspartate carbamoyltransferase catalytic subunit.